A 949-amino-acid polypeptide reads, in one-letter code: Bifunctional uridylyltransferase/uridylyl-removing enzyme (949 aa).

Positions 1–37 (MKETSFWGETPSLSFADDTDKPLSDRTASPPCDPASS) are disordered. Positions 1–395 (MKETSFWGET…TTGEPPKVVP (395 aa)) are uridylyltransferase. The segment at 396 to 756 (GPEEFQTIAG…AYPIPERGVT (361 aa)) is uridylyl-removing. The region spanning 516-632 (VDEHIVEAVR…LDLADTIQSP (117 aa)) is the HD domain. ACT domains lie at 757-834 (ELTV…LDIR) and 870-949 (VIEV…TPAS).

It belongs to the GlnD family. The cofactor is Mg(2+).

The enzyme catalyses [protein-PII]-L-tyrosine + UTP = [protein-PII]-uridylyl-L-tyrosine + diphosphate. It catalyses the reaction [protein-PII]-uridylyl-L-tyrosine + H2O = [protein-PII]-L-tyrosine + UMP + H(+). Uridylyltransferase (UTase) activity is inhibited by glutamine, while glutamine activates uridylyl-removing (UR) activity. In terms of biological role, modifies, by uridylylation and deuridylylation, the PII regulatory proteins (GlnB and homologs), in response to the nitrogen status of the cell that GlnD senses through the glutamine level. Under low glutamine levels, catalyzes the conversion of the PII proteins and UTP to PII-UMP and PPi, while under higher glutamine levels, GlnD hydrolyzes PII-UMP to PII and UMP (deuridylylation). Thus, controls uridylylation state and activity of the PII proteins, and plays an important role in the regulation of nitrogen assimilation and metabolism. The chain is Bifunctional uridylyltransferase/uridylyl-removing enzyme from Gluconobacter oxydans (strain 621H) (Gluconobacter suboxydans).